Here is a 171-residue protein sequence, read N- to C-terminus: ATP synthase subunit b (171 aa).

A helical membrane pass occupies residues 13 to 33 (GVEWGTTFVTLVTFVILIILL).

The protein belongs to the ATPase B chain family. As to quaternary structure, F-type ATPases have 2 components, F(1) - the catalytic core - and F(0) - the membrane proton channel. F(1) has five subunits: alpha(3), beta(3), gamma(1), delta(1), epsilon(1). F(0) has three main subunits: a(1), b(2) and c(10-14). The alpha and beta chains form an alternating ring which encloses part of the gamma chain. F(1) is attached to F(0) by a central stalk formed by the gamma and epsilon chains, while a peripheral stalk is formed by the delta and b chains.

The protein localises to the cell membrane. Its function is as follows. F(1)F(0) ATP synthase produces ATP from ADP in the presence of a proton or sodium gradient. F-type ATPases consist of two structural domains, F(1) containing the extramembraneous catalytic core and F(0) containing the membrane proton channel, linked together by a central stalk and a peripheral stalk. During catalysis, ATP synthesis in the catalytic domain of F(1) is coupled via a rotary mechanism of the central stalk subunits to proton translocation. Functionally, component of the F(0) channel, it forms part of the peripheral stalk, linking F(1) to F(0). This Staphylococcus epidermidis (strain ATCC 12228 / FDA PCI 1200) protein is ATP synthase subunit b.